The following is a 1453-amino-acid chain: Scavenger receptor cysteine-rich type 1 protein M160 (1453 aa).

An N-terminal signal peptide occupies residues 1-40 (MMLPQNSWHIDFGRCCCHQNLFSAVVTCILLLNSCFLISS). The Extracellular portion of the chain corresponds to 41–1359 (FNGTDLELRL…LKSLNASSGH (1319 aa)). 4 N-linked (GlcNAc...) asparagine glycosylation sites follow: Asn42, Asn78, Asn120, and Asn161. 9 consecutive SRCR domains span residues 48–148 (LRLV…VNCY), 155–255 (LRLV…LTCY), 262–362 (LRLV…VICS), 369–469 (LRLA…VICS), 476–576 (LRLV…VTCS), 583–683 (LRLV…VICS), 690–790 (LRLV…LICS), 795–895 (PRLV…VVCS), and 900–1000 (VRLV…VICT). 3 cysteine pairs are disulfide-bonded: Cys73-Cys137, Cys86-Cys147, and Cys117-Cys127. Intrachain disulfides connect Cys180–Cys244, Cys193–Cys254, Cys224–Cys234, Cys287–Cys351, Cys300–Cys361, and Cys331–Cys341. N-linked (GlcNAc...) asparagine glycosylation is found at Asn334, Asn377, Asn441, Asn548, and Asn637. 18 disulfides stabilise this stretch: Cys394/Cys458, Cys407/Cys468, Cys438/Cys448, Cys501/Cys565, Cys514/Cys575, Cys545/Cys555, Cys608/Cys672, Cys621/Cys682, Cys652/Cys662, Cys715/Cys779, Cys728/Cys789, Cys759/Cys769, Cys820/Cys884, Cys833/Cys894, Cys864/Cys874, Cys925/Cys989, Cys938/Cys999, and Cys969/Cys979. N-linked (GlcNAc...) asparagine glycosylation is found at Asn972, Asn1013, Asn1084, and Asn1104. SRCR domains lie at 1036–1136 (LRLV…VICS), 1141–1243 (LRLY…ITCE), and 1246–1346 (IRVR…VRCS). Intrachain disulfides connect Cys1061/Cys1125, Cys1074/Cys1135, and Cys1105/Cys1115. N-linked (GlcNAc...) asparagine glycosylation is found at Asn1161 and Asn1171. 5 cysteine pairs are disulfide-bonded: Cys1181-Cys1242, Cys1212-Cys1222, Cys1271-Cys1335, Cys1284-Cys1345, and Cys1315-Cys1325. Residues Asn1318 and Asn1354 are each glycosylated (N-linked (GlcNAc...) asparagine). The chain crosses the membrane as a helical span at residues 1360–1380 (LALILSSIFGLLLLVLFILFL). Topologically, residues 1381 to 1453 (TWCRVQKQKH…GVLPASEATK (73 aa)) are cytoplasmic. Basic and acidic residues predominate over residues 1418-1435 (EDPHGTRTSDDTPNHGCE). The disordered stretch occupies residues 1418-1453 (EDPHGTRTSDDTPNHGCEDASDTSLLGVLPASEATK).

In terms of tissue distribution, isoform 1 is highly expressed in the spleen, lymph nodes, thymus, and fetal liver and weakly expressed in bone marrow and no expression was found in peripheral blood leukocytes. Isoform 1 expression is restricted to the monocyte and macrophage cell lines. Isoform 2 is only expressed in spleen.

It localises to the cell membrane. Its subcellular location is the secreted. This Homo sapiens (Human) protein is Scavenger receptor cysteine-rich type 1 protein M160 (CD163L1).